The sequence spans 419 residues: Gamma-glutamyl phosphate reductase (419 aa).

Belongs to the gamma-glutamyl phosphate reductase family.

It is found in the cytoplasm. The catalysed reaction is L-glutamate 5-semialdehyde + phosphate + NADP(+) = L-glutamyl 5-phosphate + NADPH + H(+). It participates in amino-acid biosynthesis; L-proline biosynthesis; L-glutamate 5-semialdehyde from L-glutamate: step 2/2. In terms of biological role, catalyzes the NADPH-dependent reduction of L-glutamate 5-phosphate into L-glutamate 5-semialdehyde and phosphate. The product spontaneously undergoes cyclization to form 1-pyrroline-5-carboxylate. The polypeptide is Gamma-glutamyl phosphate reductase (Bordetella parapertussis (strain 12822 / ATCC BAA-587 / NCTC 13253)).